A 1259-amino-acid polypeptide reads, in one-letter code: Neural cell adhesion molecule L1 (1259 aa).

Positions 1-19 (MVMMLWYVLPLLLCSPCLL) are cleaved as a signal peptide. The Extracellular segment spans residues 20–1122 (IQIPDEYKGH…VSTTGSFASE (1103 aa)). 6 Ig-like C2-type domains span residues 35–128 (PVIT…HEIQ), 138–225 (PKET…EPID), 239–327 (PRLL…YYVT), 332–419 (PYWL…AYIY), 424–506 (PARI…NNVT), and 517–600 (TQIT…DEVE). Intrachain disulfides connect Cys-57-Cys-113 and Cys-157-Cys-208. Residues Asn-100, Asn-202, Asn-246, and Asn-293 are each glycosylated (N-linked (GlcNAc...) asparagine). 2 disulfide bridges follow: Cys-263–Cys-311 and Cys-353–Cys-403. Asn-432, Asn-489, and Asn-504 each carry an N-linked (GlcNAc...) asparagine glycan. A disulfide bridge connects residues Cys-447 and Cys-496. A disulfide bond links Cys-538 and Cys-590. 2 short sequence motifs (cell attachment site) span residues 553–555 (RGD) and 562–564 (RGD). Fibronectin type-III domains are found at residues 613–711 (PVPH…TPEA), 716–809 (NPVD…SGED), 811–916 (PQVS…PEGV), 919–1014 (HPEA…MALF), and 1016–1116 (KPDF…VSTT). N-linked (GlcNAc...) asparagine glycosylation occurs at Asn-670. Residues 697–724 (GEPSPVSETVVTPEAAPEKNPVDVRGEG) are disordered. Residues 712–724 (APEKNPVDVRGEG) are compositionally biased toward basic and acidic residues. N-linked (GlcNAc...) asparagine glycans are attached at residues Asn-725, Asn-776, Asn-824, Asn-848, Asn-875, Asn-968, Asn-978, Asn-1021, Asn-1029, Asn-1072, and Asn-1106. The chain crosses the membrane as a helical span at residues 1123-1145 (GWFIAFVSAIILLLLILLILCFI). Topologically, residues 1146 to 1259 (KRSKGGKYSV…SPINPAVALE (114 aa)) are cytoplasmic. Ser-1165, Arg-1179, Ser-1180, Ser-1183, Ser-1196, Ser-1245, Ser-1246, and Ser-1250 each carry phosphoserine. Disordered stretches follow at residues 1182–1209 (ESDNEEKAFGSSQPSLNGDIKPLGSDDS) and 1228–1259 (IGQYSGKKEKEAAGGNDSSGATSPINPAVALE). A compositionally biased stretch (polar residues) spans 1243 to 1252 (NDSSGATSPI).

Belongs to the immunoglobulin superfamily. L1/neurofascin/NgCAM family. As to quaternary structure, interacts with SHTN1; the interaction occurs in axonal growth cones. Interacts with isoform 2 of BSG. Isoform 2 is predominantly found in the brain, while isoform 1 is found in the peripheral nervous system.

It localises to the cell membrane. Its subcellular location is the cell projection. The protein resides in the growth cone. Functionally, neural cell adhesion molecule involved in the dynamics of cell adhesion and in the generation of transmembrane signals at tyrosine kinase receptors. During brain development, critical in multiple processes, including neuronal migration, axonal growth and fasciculation, and synaptogenesis. In the mature brain, plays a role in the dynamics of neuronal structure and function, including synaptic plasticity. The chain is Neural cell adhesion molecule L1 (L1cam) from Rattus norvegicus (Rat).